The primary structure comprises 68 residues: MMSKLGVLLTICLLLFPLTAVPLDGDQHADRPADRMQDISSEQHPLFDPVKRCCDWPCTIGCVPCCLP.

The signal sequence occupies residues 1–20 (MMSKLGVLLTICLLLFPLTA). Positions 21-50 (VPLDGDQHADRPADRMQDISSEQHPLFDPV) are excised as a propeptide. Disulfide bonds link Cys53–Cys66, Cys54–Cys62, and Cys58–Cys65. Pro64 bears the 4-hydroxyproline mark.

This sequence belongs to the conotoxin M superfamily. As to expression, expressed by the venom duct.

It is found in the secreted. This Conus tessulatus (Tessellate cone) protein is Conotoxin TsMMSK-021.